Here is a 323-residue protein sequence, read N- to C-terminus: Beta-ketoacyl-[acyl-carrier-protein] synthase III (323 aa).

Active-site residues include Cys113 and His250. The segment at 251–255 is ACP-binding; that stretch reads QANKR. The active site involves Asn280.

The protein belongs to the thiolase-like superfamily. FabH family. As to quaternary structure, homodimer.

Its subcellular location is the cytoplasm. The catalysed reaction is malonyl-[ACP] + acetyl-CoA + H(+) = 3-oxobutanoyl-[ACP] + CO2 + CoA. The protein operates within lipid metabolism; fatty acid biosynthesis. In terms of biological role, catalyzes the condensation reaction of fatty acid synthesis by the addition to an acyl acceptor of two carbons from malonyl-ACP. Catalyzes the first condensation reaction which initiates fatty acid synthesis and may therefore play a role in governing the total rate of fatty acid production. Possesses both acetoacetyl-ACP synthase and acetyl transacylase activities. Its substrate specificity determines the biosynthesis of branched-chain and/or straight-chain of fatty acids. The chain is Beta-ketoacyl-[acyl-carrier-protein] synthase III from Brucella suis (strain ATCC 23445 / NCTC 10510).